The chain runs to 310 residues: Tagatose-6-phosphate kinase (310 aa).

It belongs to the carbohydrate kinase PfkB family. LacC subfamily.

It catalyses the reaction D-tagatofuranose 6-phosphate + ATP = D-tagatofuranose 1,6-bisphosphate + ADP + H(+). Its pathway is carbohydrate metabolism; D-tagatose 6-phosphate degradation; D-glyceraldehyde 3-phosphate and glycerone phosphate from D-tagatose 6-phosphate: step 1/2. The chain is Tagatose-6-phosphate kinase from Streptococcus agalactiae serotype V (strain ATCC BAA-611 / 2603 V/R).